Here is a 449-residue protein sequence, read N- to C-terminus: Glucose-6-phosphate isomerase (449 aa).

Residue Glu291 is the Proton donor of the active site. Residues His312 and Lys426 contribute to the active site.

The protein belongs to the GPI family.

It is found in the cytoplasm. It catalyses the reaction alpha-D-glucose 6-phosphate = beta-D-fructose 6-phosphate. Its pathway is carbohydrate biosynthesis; gluconeogenesis. The protein operates within carbohydrate degradation; glycolysis; D-glyceraldehyde 3-phosphate and glycerone phosphate from D-glucose: step 2/4. In terms of biological role, catalyzes the reversible isomerization of glucose-6-phosphate to fructose-6-phosphate. The sequence is that of Glucose-6-phosphate isomerase from Streptococcus pyogenes serotype M2 (strain MGAS10270).